Consider the following 396-residue polypeptide: Tryptophan synthase beta chain (396 aa).

The residue at position 86 (Lys-86) is an N6-(pyridoxal phosphate)lysine.

Belongs to the TrpB family. Tetramer of two alpha and two beta chains. Pyridoxal 5'-phosphate is required as a cofactor.

It catalyses the reaction (1S,2R)-1-C-(indol-3-yl)glycerol 3-phosphate + L-serine = D-glyceraldehyde 3-phosphate + L-tryptophan + H2O. It participates in amino-acid biosynthesis; L-tryptophan biosynthesis; L-tryptophan from chorismate: step 5/5. Functionally, the beta subunit is responsible for the synthesis of L-tryptophan from indole and L-serine. In Francisella tularensis subsp. tularensis (strain FSC 198), this protein is Tryptophan synthase beta chain.